We begin with the raw amino-acid sequence, 237 residues long: Purine nucleoside phosphorylase DeoD-type (237 aa).

Residue H4 participates in a purine D-ribonucleoside binding. Phosphate contacts are provided by residues G20, R24, R43, and 87–90; that span reads RVGT. A purine D-ribonucleoside is bound by residues 179 to 181 and 203 to 204; these read EME and SD. The Proton donor role is filled by D204.

It belongs to the PNP/UDP phosphorylase family. Homohexamer; trimer of homodimers.

The catalysed reaction is a purine D-ribonucleoside + phosphate = a purine nucleobase + alpha-D-ribose 1-phosphate. It carries out the reaction a purine 2'-deoxy-D-ribonucleoside + phosphate = a purine nucleobase + 2-deoxy-alpha-D-ribose 1-phosphate. Catalyzes the reversible phosphorolytic breakdown of the N-glycosidic bond in the beta-(deoxy)ribonucleoside molecules, with the formation of the corresponding free purine bases and pentose-1-phosphate. In Streptococcus pyogenes serotype M4 (strain MGAS10750), this protein is Purine nucleoside phosphorylase DeoD-type.